We begin with the raw amino-acid sequence, 142 residues long: Hemoglobin subunit alpha-1 (142 aa).

Ser1 is subject to N-acetylserine. The region spanning 1–142 (SLSDKDKAAV…VALALAQRYR (142 aa)) is the Globin domain. His59 provides a ligand contact to O2. His88 serves as a coordination point for heme b.

Belongs to the globin family. Hb1 is a heterotetramer of two alpha-2 chains and two beta chains. As to expression, red blood cells.

Involved in oxygen transport from gills to the various peripheral tissues. The polypeptide is Hemoglobin subunit alpha-1 (hba1) (Notothenia neglecta (Yellowbelly rockcod)).